We begin with the raw amino-acid sequence, 464 residues long: Serine--tRNA synthetase-like protein Slimp (464 aa).

The protein belongs to the class-II aminoacyl-tRNA synthetase family. Type-1 seryl-tRNA synthetase subfamily.

The protein resides in the mitochondrion. In terms of biological role, essential protein which may play a role in mitochondrial morphogenesis and function. Has transfer RNA (tRNA)-binding activity and can bind tRNA(Ser) but does not have serine--tRNA ligase activity and does not bind ATP. The sequence is that of Serine--tRNA synthetase-like protein Slimp from Drosophila melanogaster (Fruit fly).